The following is a 2631-amino-acid chain: Cyclic GMP-binding protein C (2631 aa).

LRR repeat units follow at residues 170 to 194, 196 to 217, 218 to 240, 242 to 262, 263 to 285, and 287 to 308; these read TAQI…IFSL, WIQK…IGKL, QQLQ…IGDL, NLKR…LERL, SKLE…IASL, and SLKT…VVSK. The 193-residue stretch at 323 to 515 folds into the Roc domain; it reads GARPCLRSKL…QLIEDIIKTQ (193 aa). GTP-binding positions include 336–343, 402–406, and 458–461; these read GDPGVGKT, DIANQ, and THID. Residues 523 to 741 form the COR domain; sequence PSSFFTLEEA…ESCQKRAVIL (219 aa). The 295-residue stretch at 878–1172 folds into the Protein kinase domain; that stretch reads VKINKEVGRG…KKKFAPLPFT (295 aa). ATP-binding positions include 884–892 and lysine 905; that span reads VGRGAFGIV. The active-site Proton acceptor is aspartate 1023. Positions 1225 to 1250 are enriched in polar residues; it reads ISLTSSGTSPTNSPVGGLLSQSLTQP. Disordered stretches follow at residues 1225–1263 and 1387–1418; these read ISLT…ILST and SSAT…RNSV. Residues 1251-1263 show a composition bias toward low complexity; sequence ITSGGSTSGILST. The region spanning 1366 to 1539 is the N-terminal Ras-GEF domain; sequence SVSIIIAATM…QIYGTLTTHE (174 aa). Positions 1392–1404 are enriched in basic and acidic residues; that stretch reads KSEHISTRRRSDT. Residues 1620 to 1706 enclose the DEP domain; sequence PLLGITVKEK…SPTSFYMFLE (87 aa). In terms of domain architecture, Ras-GEF spans 1708–1971; the sequence is DPELIARQYT…DLKALDSLQI (264 aa). Residues 1989 to 2013 are disordered; it reads GTTNDDKEKGDENGGGLTSSNFFGN. A nucleoside 3',5'-cyclic phosphate is bound at residue 2014–2133; that stretch reads GSDELTERDW…AKFYKIMANQ (120 aa). 3 disordered regions span residues 2142-2180, 2192-2239, and 2263-2346; these read PWSK…GGGL, MSLS…TTTD, and SANL…GQQP. Positions 2144-2174 are enriched in low complexity; it reads SKPKNTTGGSSSSNQSAGPDNILGTTPTGIS. Positions 2212–2221 are enriched in pro residues; it reads LPSPPAPLQS. The segment covering 2222–2238 has biased composition (low complexity); that stretch reads PPTSGISSPTTTTSTTT. A compositionally biased stretch (basic and acidic residues) spans 2287–2299; sequence TINKDPHQRDSGS. Residues 2321–2336 are compositionally biased toward polar residues; it reads GSISYLGRTQTSTSPL. The GRAM domain maps to 2354 to 2414; that stretch reads EFCQRFALVD…KNIDKLICIN (61 aa). Residue 2490–2616 coordinates a nucleoside 3',5'-cyclic phosphate; it reads GDELTKEDWE…ASKWFKYLAT (127 aa).

The protein belongs to the protein kinase superfamily. TKL Ser/Thr protein kinase family. ROCO subfamily.

The enzyme catalyses L-seryl-[protein] + ATP = O-phospho-L-seryl-[protein] + ADP + H(+). It catalyses the reaction L-threonyl-[protein] + ATP = O-phospho-L-threonyl-[protein] + ADP + H(+). In terms of biological role, promotes the exchange of Ras-bound GDP by GTP. Required for cyclic GMP-mediated chemotaxis, polarity. Plays a key role in cyclic AMP-induced myosin II translocation to the cortex. Also involved in the phosphorylation of mlkA and mlcR, either directly or via an intermediate kinase. This is Cyclic GMP-binding protein C (gbpC) from Dictyostelium discoideum (Social amoeba).